A 37-amino-acid chain; its full sequence is Large ribosomal subunit protein bL36c (37 aa).

Belongs to the bacterial ribosomal protein bL36 family.

It localises to the plastid. The protein localises to the chloroplast. This is Large ribosomal subunit protein bL36c from Piper cenocladum (Ant piper).